The primary structure comprises 413 residues: Prophage integrase IntA (413 aa).

The Core-binding (CB) domain maps to 105-186 (NTFLLVAERW…RINEVMIYAQ (82 aa)). Residues 209 to 386 (KNMPSIRPDQ…DYLEQRRPMM (178 aa)) enclose the Tyr recombinase domain. Residues Arg248, Lys275, His337, Arg340, and His363 contribute to the active site. The active-site O-(3'-phospho-DNA)-tyrosine intermediate is Tyr373.

This sequence belongs to the 'phage' integrase family.

In terms of biological role, integrase is necessary for integration of the phage into the host genome by site-specific recombination. In conjunction with excisionase, integrase is also necessary for excision of the prophage from the host genome. Part of the cryptic P4-like prophage CP4-57, it excises the prophage when overexpressed, which also requires integration host factor (encoded by ihfA and ihfB). Overexpression of AlpA leads to excision of the CP4-57 prophage, which inactivates ssrA (the gene upstream of the prophage) that encodes tmRNA which is required to rescue stalled ribosomes in a process known as trans-translation. The polypeptide is Prophage integrase IntA (intA) (Escherichia coli (strain K12)).